Here is a 623-residue protein sequence, read N- to C-terminus: Phosphoenolpyruvate carboxykinase [GTP] (623 aa).

Residues Arg-86 and 220–222 (YGG) each bind substrate. Positions 229 and 248 each coordinate Mn(2+). A substrate-binding site is contributed by Ser-270. 271 to 276 (MCGKTS) lines the GTP pocket. Residue Cys-272 is part of the active site. Residue Asp-289 coordinates Mn(2+). 384-386 (NAR) lines the substrate pocket. Positions 386 and 418 each coordinate GTP.

The protein belongs to the phosphoenolpyruvate carboxykinase [GTP] family. As to quaternary structure, homotetramer. Mn(2+) serves as cofactor.

The protein resides in the cytoplasm. The enzyme catalyses oxaloacetate + GTP = phosphoenolpyruvate + GDP + CO2. It participates in carbohydrate biosynthesis; gluconeogenesis. Involved in the gluconeogenesis. Catalyzes the conversion of oxaloacetate (OAA) to phosphoenolpyruvate (PEP), the rate-limiting step in the metabolic pathway that produces glucose from lactate and other precursors derived from the citric acid cycle. In Thermococcus kodakarensis (strain ATCC BAA-918 / JCM 12380 / KOD1) (Pyrococcus kodakaraensis (strain KOD1)), this protein is Phosphoenolpyruvate carboxykinase [GTP] (pckG).